The sequence spans 702 residues: MAAAVTIPGPRIGALQSSGLTLLLSLAAHCSGPQAKVLSPGGLDASGANLWASANCSLLQGFWCQPASQLPRDQLSALIQRLALLQVPLQAWQLSCLANLASRCGLQDDFTLHPPNLLLFYNLSQVREADCRAFIRRAAQGDVELLSHLPDQRVALWRAAVACLVGAGLRLSASDQQLLGALVCDMDASSIGAADPHMLENLRRCPRLTAAQRIALNSLLAGGKTSLGPPGSWTLEGLQALGPLATYISPHLWAQVQEAVGLGFFRSVVASCQVGRLGQREARCFVTSFLESKTKPVSSRPRLSTGNITAATLRDDLFLVHYDCAELESCLDGCILRTNLDTLLQHLLPTECQHVVKAKLAQIYPQGLPEDQLRLITSLVYLYSRTEIGQWSITSQDTVMALLASDVALENQTEAVLQKFLEHNGTVSGALLLAIGGTRLCWMSPHQIQTIHPQELRLAGALDLSSCPQSRKDVLYTKAHETFGSSGTLAAYYRLMRPYLGGSPGGAQPPSPVPPGGAPVEELRHLAHANISMDIDTFTSLNPLELQSLDVGNVTALLGHNVGDLQKARSHPTVRAWLRSLNSSTLGQLGLDASPTSPTGPAHGTRGPPSTTHQVLHLVHTSGLPTNDAQASTSGSLWAPLGYLPLAMALPCSLLCLLHWGTCILVSVDSVASGWLGSQGSGAGKTEVLDSAGRPLGLTGQL.

Positions 1-35 (MAAAVTIPGPRIGALQSSGLTLLLSLAAHCSGPQA) are cleaved as a signal peptide. At 36-638 (KVLSPGGLDA…AQASTSGSLW (603 aa)) the chain is on the extracellular side. 3 N-linked (GlcNAc...) asparagine glycosylation sites follow: N122, N307, and N424. The tract at residues 588-611 (QLGLDASPTSPTGPAHGTRGPPST) is disordered. The helical transmembrane segment at 639 to 668 (APLGYLPLAMALPCSLLCLLHWGTCILVSV) threads the bilayer. Topologically, residues 669-702 (DSVASGWLGSQGSGAGKTEVLDSAGRPLGLTGQL) are cytoplasmic.

The protein belongs to the mesothelin family.

Its subcellular location is the membrane. Its function is as follows. May play a role in cellular adhesion. The polypeptide is Mesothelin-like protein (MSLNL) (Homo sapiens (Human)).